The chain runs to 373 residues: MTRSILQSARRIIVKVGSSLVTNEGSGLDRQVLGGWAGQISRLKKMGKEVVLVSSGAVAEGMQRLGWKTRPAALYELQAAAAVGQMDLAQAYADCFSEYKLLTAQILLTHDDLSSRKRYLNARSTILTLLNLDIVPIINENDTVVSDEIRFGDNDNLAALVANLIEAEVLVILTDQEGLFTGDPRKHADATLISEISVSDPHIETMAGGTSSGIGRGGMQSKVMAARRAARSGAHTVIASGRVENVLVRLANGEAIGTSLLADMPVKVARKLWLADHLQVRGSVVLDDGASRALLSGGKSLLPIGVVEVRGNFERGEAISCLNTSGREIARGLANYSARESHKIMRRPSSQIEAVLGYVGEYELVHRDNLVIL.

Lysine 15 is a binding site for ATP. Substrate is bound by residues serine 55, aspartate 142, and asparagine 154. Threonine 174–aspartate 175 serves as a coordination point for ATP. A PUA domain is found at arginine 281 to valine 359.

This sequence belongs to the glutamate 5-kinase family.

It localises to the cytoplasm. The enzyme catalyses L-glutamate + ATP = L-glutamyl 5-phosphate + ADP. It participates in amino-acid biosynthesis; L-proline biosynthesis; L-glutamate 5-semialdehyde from L-glutamate: step 1/2. Catalyzes the transfer of a phosphate group to glutamate to form L-glutamate 5-phosphate. This chain is Glutamate 5-kinase, found in Nitrosomonas eutropha (strain DSM 101675 / C91 / Nm57).